The following is a 277-amino-acid chain: MSLPEHSPLGKPSAYKTEYDATLLFPIARQPKRTEIGLPAGKPVPFFGVDIWNAYEVSWLNMRGKPQVALATFIIPSDTPNIIESKSFKLYLNSFNQTKIASPEALQQLLHHDLSEATGGTVQVRLVTEADLGKQKMGELEGLLLDRLDIEVDRYEPAPDLLKADQQESPVEETLVSHLLKSNCLVTGQPDWGSVQIRYVGAPINQEGLLKYLISFRNHNEFHEQCVERIFMDVMRECKPVKLAVYARYTRRGGLDINPFRTNFNTPWPDNLRNARQ.

Residue 83 to 85 (IES) participates in substrate binding. NADPH is bound at residue 85-86 (SK). Cys184 acts as the Thioimide intermediate in catalysis. The active-site Proton donor is the Asp191. 223–224 (HE) provides a ligand contact to substrate. Residue 252 to 253 (RG) participates in NADPH binding.

This sequence belongs to the GTP cyclohydrolase I family. QueF type 2 subfamily. In terms of assembly, homodimer.

It localises to the cytoplasm. The catalysed reaction is 7-aminomethyl-7-carbaguanine + 2 NADP(+) = 7-cyano-7-deazaguanine + 2 NADPH + 3 H(+). It participates in tRNA modification; tRNA-queuosine biosynthesis. In terms of biological role, catalyzes the NADPH-dependent reduction of 7-cyano-7-deazaguanine (preQ0) to 7-aminomethyl-7-deazaguanine (preQ1). The sequence is that of NADPH-dependent 7-cyano-7-deazaguanine reductase from Cupriavidus pinatubonensis (strain JMP 134 / LMG 1197) (Cupriavidus necator (strain JMP 134)).